The sequence spans 206 residues: Probable GTP-binding protein EngB (206 aa).

In terms of domain architecture, EngB-type G spans 24 to 198 (QGREVAFAGR…HARLDEWLGL (175 aa)). GTP is bound by residues 32 to 39 (GRSNVGKS), 59 to 63 (GRTQL), 77 to 80 (DLPG), 144 to 147 (TKAD), and 177 to 179 (FSA). Mg(2+)-binding residues include Ser-39 and Thr-61.

It belongs to the TRAFAC class TrmE-Era-EngA-EngB-Septin-like GTPase superfamily. EngB GTPase family. Mg(2+) is required as a cofactor.

Necessary for normal cell division and for the maintenance of normal septation. The sequence is that of Probable GTP-binding protein EngB from Alkalilimnicola ehrlichii (strain ATCC BAA-1101 / DSM 17681 / MLHE-1).